The primary structure comprises 291 residues: Urease accessory protein UreD (291 aa).

The protein belongs to the UreD family. In terms of assembly, ureD, UreF and UreG form a complex that acts as a GTP-hydrolysis-dependent molecular chaperone, activating the urease apoprotein by helping to assemble the nickel containing metallocenter of UreC. The UreE protein probably delivers the nickel.

The protein resides in the cytoplasm. Functionally, required for maturation of urease via the functional incorporation of the urease nickel metallocenter. The chain is Urease accessory protein UreD from Acinetobacter baumannii (strain ATCC 17978 / DSM 105126 / CIP 53.77 / LMG 1025 / NCDC KC755 / 5377).